Consider the following 1721-residue polypeptide: Intersectin-1 (1721 aa).

An EH 1 domain is found at 21 to 109 (ERAKHDQQFH…PVMKQQPVAI (89 aa)). One can recognise an EF-hand 1 domain in the interval 53 to 88 (LPQPVLAQIWALADMNNDGRMDQVEFSIAMKLIKLK). Asp66, Asn68, Asp70, Arg72, and Glu77 together coordinate Ca(2+). Residue Ser203 is modified to Phosphoserine. The 90-residue stretch at 221–310 (SRLKYRQLFN…PEYIPPSFRR (90 aa)) folds into the EH 2 domain. The region spanning 254–289 (LPQAQLASIWNLSDIDQDGKLTAEEFILAMHLIDVA) is the EF-hand 2 domain. Positions 267, 269, 271, 273, and 278 each coordinate Ca(2+). At Ser318 the chain carries Phosphoserine. Disordered regions lie at residues 322 to 348 (STSV…KLPV) and 650 to 701 (QRRA…KQEA). Positions 326-702 (DQRLPEEPVL…GEEKGKQEAQ (377 aa)) are KLERQ. Residues 355–659 (RENFERGNLE…QRRAQERDKQ (305 aa)) adopt a coiled-coil conformation. A Phosphoserine modification is found at Ser687. Positions 740 to 806 (VKVVYYRALY…PANYAEKIPE (67 aa)) constitute an SH3 1 domain. The interval 836–868 (LAVTSSEPSTTPNNWADFSSTWPTSTNEKPETD) is disordered. Over residues 838–862 (VTSSEPSTTPNNWADFSSTWPTSTN) the composition is skewed to polar residues. Thr897 carries the post-translational modification Phosphothreonine. Residues Ser901, Ser902, and Ser904 each carry the phosphoserine modification. The region spanning 913–971 (VEGLQAQALYPWRAKKDNHLNFNKNDVITVLEQQDMWWFGEVQGQKGWFPKSYVKLISG) is the SH3 2 domain. A phosphoserine mark is found at Ser978, Ser986, and Ser995. SH3 domains are found at residues 1002 to 1060 (VSGE…LKDS) and 1074 to 1138 (KKPE…LLSP). Residues 1074–1138 (KKPEIAQVIA…PANYVKLLSP (65 aa)) form a required for interaction with FCHSD2 region. The Bipartite nuclear localization signal; in isoform 2 motif lies at 1104–1127 (RKKNPGGWWEGELQARGKKRQIGW). Phosphoserine is present on Ser1137. The residue at position 1144 (Thr1144) is a Phosphothreonine. Residues 1155–1214 (AAVCQVIGMYDYTAQNDDELAFNKGQIINVLNKEDPDWWKGEVNGQVGLFPSNYVKLTTD) form the SH3 5 domain. A DH domain is found at 1237–1423 (KRQGYIHELI…EELCSQVNEG (187 aa)). Residues 1462–1571 (KFLHSGKLYK…WVQKIKAASE (110 aa)) enclose the PH domain. In terms of domain architecture, C2 spans 1579–1695 (KKREKAYLVR…KKDQGSKGPV (117 aa)). At Ser1645 the chain carries Phosphoserine. 3 residues coordinate Ca(2+): Asp1667, Ser1670, and Asp1673.

As to quaternary structure, interacts (via DH domain) with CDC42. Interacts (via SH3 domain 1) with WASL. Interacts with dynamin, SNAP25 and SNAP23. Interacts with clathrin-associated proteins and other components of the endocytic machinery, such as SPIN90, EPS15, EPN1, EPN2, STON2, FCHO1, FCHO2 and DAB2. Interacts (via SH3 domains) with REPS1 and SGIP1. Interacts with ARHGAP31. Interacts with ADAM15. Interacts with PRRT2. Interacts (via SH3 domain 4) with FCHSD2 (via SH3 domain 2). Interacts (via SH3 domain 1) with DENND2B. Interacts (via SH3 domains) with CBL. Isoform 2: Interacts with CBL and DNM1. Isoform 2: Interacts with LMNA. Isoform 2: Interacts with importin subunit KPNA1; this is likely to mediate its import into the nucleus. Interacts with DNM2. (Microbial infection) Interacts with vaccinia virus protein A36. It depends on Ca(2+) as a cofactor. In terms of tissue distribution, isoform 1 is expressed almost exclusively in the brain. Isoform 2 is detected in brain, spleen, lung, liver, heart, skeletal muscle and kidney. Isoform 5 is primarily expressed in brain, spleen, lung and kidney (at protein level). Isoform 1 and isoform 2 are detected in brain. Isoform 2 is ubiquitous in adult and fetal tissues with high expression in skeletal muscle, heart, spleen, ovary, testis and all fetal tissues tested and low expression in thymus, blood, lung, liver and pancreas. Isoform 1 is expressed almost exclusively in the brain, in all brain regions. Not expressed in the spinal cord.

Its subcellular location is the endomembrane system. It localises to the synapse. The protein resides in the synaptosome. It is found in the cell projection. The protein localises to the lamellipodium. Its subcellular location is the cell membrane. It localises to the membrane. The protein resides in the clathrin-coated pit. It is found in the recycling endosome. The protein localises to the endosome. Its subcellular location is the cytoplasmic vesicle. It localises to the cytoplasm. The protein resides in the nucleus envelope. Functionally, adapter protein that provides a link between the endocytic membrane traffic and the actin assembly machinery. Acts as a guanine nucleotide exchange factor (GEF) for CDC42, and thereby stimulates actin nucleation mediated by WASL and the ARP2/3 complex. Plays a role in the assembly and maturation of clathrin-coated vesicles. Recruits FCHSD2 to clathrin-coated pits. Involved in endocytosis of activated EGFR, and probably also other growth factor receptors. Involved in endocytosis of integrin beta-1 (ITGB1) and transferrin receptor (TFR); internalization of ITGB1 as DAB2-dependent cargo but not TFR may involve association with DAB2. Promotes ubiquitination and subsequent degradation of EGFR, and thereby contributes to the down-regulation of EGFR-dependent signaling pathways. In chromaffin cells, required for normal exocytosis of catecholamines. Required for rapid replenishment of release-ready synaptic vesicles at presynaptic active zones. Inhibits ARHGAP31 activity toward RAC1. Its function is as follows. Plays a role in synaptic vesicle endocytosis in brain neurons. This chain is Intersectin-1, found in Homo sapiens (Human).